Here is a 370-residue protein sequence, read N- to C-terminus: 2-Hydroxyacid oxidase 1 (370 aa).

An FMN hydroxy acid dehydrogenase domain is found at 1–365 (MLPRLICIND…DKTLVRKNPL (365 aa)). A glyoxylate-binding site is contributed by Tyr-26. Residues 79–81 (ATA), Ser-108, and Gln-130 each bind FMN. Tyr-132 contacts glyoxylate. Thr-158 serves as a coordination point for FMN. A glyoxylate-binding site is contributed by Arg-167. Lys-184 bears the N6-succinyllysine mark. Residues Ser-194 and Ser-230 each carry the phosphoserine modification. Residues Lys-236 and Ser-258 each contribute to the FMN site. 2 residues coordinate glyoxylate: His-260 and Arg-263. Catalysis depends on His-260, which acts as the Proton acceptor. Residues 291–295 (DGGVR) and 314–315 (GR) contribute to the FMN site. Positions 368–370 (SKI) match the Microbody targeting signal motif.

It belongs to the FMN-dependent alpha-hydroxy acid dehydrogenase family. As to quaternary structure, homotetramer. It depends on FMN as a cofactor. As to expression, highly expressed in liver.

It is found in the peroxisome matrix. It catalyses the reaction a (2S)-2-hydroxycarboxylate + O2 = a 2-oxocarboxylate + H2O2. It carries out the reaction glycolate + O2 = glyoxylate + H2O2. The enzyme catalyses glyoxylate + O2 + H2O = oxalate + H2O2 + H(+). The catalysed reaction is 2-hydroxyhexadecanoate + O2 = 2-oxohexadecanoate + H2O2. It catalyses the reaction 2-hydroxyoctanoate + O2 = 2-oxooctanoate + H2O2. Its pathway is amino-acid biosynthesis; glycine biosynthesis. Inhibited by its product oxalate. Inhibited by high concentrations of dichlorophenolindophenol (DCIP) in vitro. In terms of biological role, broad substrate specificity (S)-2-hydroxy-acid oxidase that preferentially oxidizes glycolate. The glyoxylate produced by the oxidation of glycolate can then be utilized by alanine-glyoxylate aminotransferase for the peroxisomal synthesis of glycine; this pathway appears to be an important step for the detoxification of glyoxylate which, if allowed to accumulate, may be metabolized to oxalate with formation of kidney stones. Can also catalyze the oxidation of glyoxylate, and long chain hydroxyacids such as 2-hydroxyhexadecanoate and 2-hydroxyoctanoate, albeit with much lower catalytic efficiency. Active in vitro with the artificial electron acceptor 2,6-dichlorophenolindophenol (DCIP), but O2 is believed to be the physiological electron acceptor, leading to the production of H2O2. Is not active on L-lactate and 2-hydroxybutanoate. The polypeptide is 2-Hydroxyacid oxidase 1 (Homo sapiens (Human)).